The primary structure comprises 372 residues: Serine/threonine-protein kinase 17B (372 aa).

The Protein kinase domain occupies 33–293; the sequence is TLTPKELGRG…AESCLSHSWL (261 aa). Residues 39–47 and Lys62 each bind ATP; that span reads LGRGKFAVV. Asp158 acts as the Proton acceptor in catalysis. Residues 305-348 form a disordered region; that stretch reads EETSGSSQIQDLTLRSSEEKTSKSSCNGSCGAREDKENIPEDGS. Over residues 307-319 the composition is skewed to polar residues; it reads TSGSSQIQDLTLR.

It belongs to the protein kinase superfamily. CAMK Ser/Thr protein kinase family. DAP kinase subfamily. In terms of assembly, interacts with CHP1; the interaction induces CHP1 to translocate from the Golgi to the nucleus. Autophosphorylated.

It localises to the nucleus. The protein localises to the cell membrane. The protein resides in the endoplasmic reticulum-Golgi intermediate compartment. It carries out the reaction L-seryl-[protein] + ATP = O-phospho-L-seryl-[protein] + ADP + H(+). The catalysed reaction is L-threonyl-[protein] + ATP = O-phospho-L-threonyl-[protein] + ADP + H(+). In terms of biological role, acts as a positive regulator of apoptosis. Phosphorylates myosin light chains. The polypeptide is Serine/threonine-protein kinase 17B (Stk17b) (Mus musculus (Mouse)).